A 169-amino-acid polypeptide reads, in one-letter code: Der GTPase-activating protein YihI (169 aa).

Disordered regions lie at residues Met-1 to Leu-99 and Ser-146 to Asn-169. A compositionally biased stretch (basic residues) spans Ser-10–Lys-19. The segment covering Thr-20–Asp-30 has biased composition (basic and acidic residues). Residues Arg-31 to His-40 are compositionally biased toward basic residues. Residues Gly-49–Gln-58 show a composition bias toward polar residues. Over residues Tyr-147–Gln-159 the composition is skewed to acidic residues. Residues Glu-160 to Asn-169 are compositionally biased toward basic and acidic residues.

Belongs to the YihI family. Interacts with Der.

A GTPase-activating protein (GAP) that modifies Der/EngA GTPase function. May play a role in ribosome biogenesis. The protein is Der GTPase-activating protein YihI of Escherichia coli O81 (strain ED1a).